Consider the following 425-residue polypeptide: MASKEMFEDTVEERVINEEYKIWKKNTPFLYDLVMTHALQWPSLTVQWLPEVTKPEGKDYALHWLVLGTHTSDEQNHLVVARVHIPNDDAQFDASHCDSDKGEFGGFGSVTGKIECEIKINHEGEVNRARYMPQNPHIIATKTPSSDVLVFDYTKHPAKPDPSGECNPDLRLRGHQKEGYGLSWNSNLSGHLLSASDDHTVCLWDINAGPKEGKIVDAKAIFTGHSAVVEDVAWHLLHESLFGSVADDQKLMIWDTRSNTTSKPSHLVDAHTAEVNCLSFNPYSEFILATGSADKTVALWDLRNLKLKLHTFESHKDEIFQVHWSPHNETILASSGTDRRLNVWDLSKIGEEQSAEDAEDGPPELLFIHGGHTAKISDFSWNPNEPWVICSVSEDNIMQIWQMAENIYNDEESDVTASELEGQGS.

At Ala2 the chain carries N-acetylalanine. Position 3 is a phosphoserine (Ser3). An N6-acetyllysine; alternate modification is found at Lys4. Lys4 participates in a covalent cross-link: Glycyl lysine isopeptide (Lys-Gly) (interchain with G-Cter in SUMO2); alternate. Residue Lys4 forms a Glycyl lysine isopeptide (Lys-Gly) (interchain with G-Cter in ubiquitin); alternate linkage. Position 10 is a phosphothreonine (Thr10). 7 WD repeats span residues 47–122, 128–173, 181–217, 228–269, 275–312, 318–369, and 376–403; these read QWLP…KINH, RARY…LRLR, GLSW…KIVD, VVED…HLVD, VNCL…LHTF, EIFQ…LFIH, and ISDF…IWQM. A Phosphoserine modification is found at Ser95. Lys101 is covalently cross-linked (Glycyl lysine isopeptide (Lys-Gly) (interchain with G-Cter in SUMO2)). Lys119 is subject to N6-acetyllysine. Lys155 is covalently cross-linked (Glycyl lysine isopeptide (Lys-Gly) (interchain with G-Cter in SUMO2)). Lys159 is subject to N6-acetyllysine; alternate. Lys159 is covalently cross-linked (Glycyl lysine isopeptide (Lys-Gly) (interchain with G-Cter in SUMO2); alternate). Position 354 is a phosphoserine (Ser354).

The protein belongs to the WD repeat RBAP46/RBAP48/MSI1 family. Binds directly to helix 1 of the histone fold of histone H4, a region that is not accessible when H4 is in chromatin. Subunit of the type B histone acetyltransferase (HAT) complex, composed of RBBP7 and HAT1. Subunit of the core histone deacetylase (HDAC) complex, which is composed of HDAC1, HDAC2, RBBP4 and RBBP7. The core HDAC complex associates with SIN3A, ARID4B/SAP180, SAP18, SAP30, SAP130, SUDS3/SAP45 and possibly ARID4A/RBP1 and ING1 to form the SIN3 HDAC complex. Component of the nucleosome remodeling and deacetylase (NuRD) repressor complex, composed of core proteins MTA1, MTA2, MTA3, RBBP4, RBBP7, HDAC1, HDAC2, MBD2, MBD3, and peripherally associated proteins CDK2AP1, CDK2AP2, GATAD2A, GATAD2B, CHD3, CHD4 and CHD5. The exact stoichiometry of the NuRD complex is unknown, and some subunits such as MBD2 and MBD3, GATAD2A and GATAD2B, and CHD3, CHD4 and CHD5 define mutually exclusive NuRD complexes. The NuRD complex may interact with MBD3L1. The NuRD complex may interact with MBD3L2. Subunit of the PRC2/EED-EZH2 complex, which is composed of at least EED, EZH2, RBBP4, RBBP7 and SUZ12. The PRC2/EED-EZH2 complex may also associate with HDAC1. Component of the NURF-1 ISWI chromatin remodeling complex (also called the nucleosome-remodeling factor (NURF) complex) at least composed of SMARCA1, BPTF, RBBP4 and RBBP7. Within the complex interacts with SMARCA1. Component of the BPFT-SMARCA1 complex at least composed of SMARCA1, BPFT, RBBP4 and RBBP7; the complex is catalytically inactive and does not remodel chromatin. Within the complex interacts with SMARCA1. Interacts with BRCA1. Interacts with CDK2AP1. Interacts with CENPA. Interacts with CHD3. Interacts with CHD4. Interacts with CREBBP, and this interaction may be enhanced by the binding of phosphorylated CREB1 to CREBBP. Interacts with HDAC7. Interacts with MTA1. Interacts with PWWP2B. Interacts with RB1 (via viral protein-binding domain). Interacts with SUV39H1. As to expression, higher levels in brain, thymus, lung, spleen, kidney, testis, and ovary/uterus; lower levels in heart, liver, and muscle.

It localises to the nucleus. Core histone-binding subunit that may target chromatin remodeling factors, histone acetyltransferases and histone deacetylases to their histone substrates in a manner that is regulated by nucleosomal DNA. Component of several complexes which regulate chromatin metabolism. These include the type B histone acetyltransferase (HAT) complex, which is required for chromatin assembly following DNA replication; the core histone deacetylase (HDAC) complex, which promotes histone deacetylation and consequent transcriptional repression; the nucleosome remodeling and histone deacetylase complex (the NuRD complex), which promotes transcriptional repression by histone deacetylation and nucleosome remodeling; and the PRC2/EED-EZH2 complex, which promotes repression of homeotic genes during development; and the NURF (nucleosome remodeling factor) complex. This Mus musculus (Mouse) protein is Histone-binding protein RBBP7 (Rbbp7).